We begin with the raw amino-acid sequence, 180 residues long: Large ribosomal subunit protein uL6 (180 aa).

The protein belongs to the universal ribosomal protein uL6 family. Part of the 50S ribosomal subunit.

This protein binds to the 23S rRNA, and is important in its secondary structure. It is located near the subunit interface in the base of the L7/L12 stalk, and near the tRNA binding site of the peptidyltransferase center. This Caldanaerobacter subterraneus subsp. tengcongensis (strain DSM 15242 / JCM 11007 / NBRC 100824 / MB4) (Thermoanaerobacter tengcongensis) protein is Large ribosomal subunit protein uL6.